A 201-amino-acid chain; its full sequence is Recombination protein RecR (201 aa).

Residues 57 to 72 form a C4-type zinc finger; that stretch reads CTHCRTFTEEESCAIC. Positions 81–176 constitute a Toprim domain; that stretch reads GFLCVVEQPS…KVSRIAHGIP (96 aa).

It belongs to the RecR family.

Its function is as follows. May play a role in DNA repair. It seems to be involved in an RecBC-independent recombinational process of DNA repair. It may act with RecF and RecO. The sequence is that of Recombination protein RecR from Histophilus somni (strain 2336) (Haemophilus somnus).